The sequence spans 419 residues: Elongation factor Tu, chloroplastic (419 aa).

The 205-residue stretch at 10–214 folds into the tr-type G domain; that stretch reads KPHVNIGTIG…KVDEYIPTPD (205 aa). The interval 19-26 is G1; that stretch reads GHVDHGKT. A GTP-binding site is contributed by 19–26; sequence GHVDHGKT. Threonine 26 serves as a coordination point for Mg(2+). Residues 60–64 form a G2 region; that stretch reads GITIN. Residues 81-84 are G3; the sequence is DCPG. GTP is bound by residues 81–85 and 136–139; these read DCPGH and NKED. The tract at residues 136–139 is G4; it reads NKED. The tract at residues 174–176 is G5; the sequence is SAL.

The protein belongs to the TRAFAC class translation factor GTPase superfamily. Classic translation factor GTPase family. EF-Tu/EF-1A subfamily.

It localises to the plastid. The protein localises to the chloroplast. It catalyses the reaction GTP + H2O = GDP + phosphate + H(+). In terms of biological role, GTP hydrolase that promotes the GTP-dependent binding of aminoacyl-tRNA to the A-site of ribosomes during protein biosynthesis. In Tetradesmus obliquus (Green alga), this protein is Elongation factor Tu, chloroplastic (tufA).